We begin with the raw amino-acid sequence, 366 residues long: uncharacterized protein (366 aa).

This is an uncharacterized protein from Caenorhabditis elegans.